A 1079-amino-acid polypeptide reads, in one-letter code: Spermatogenesis-associated protein 31G1 (1079 aa).

8 disordered regions span residues 97–145 (EVEE…GSEG), 261–281 (EDLE…SPSV), 297–317 (GVLS…LEVL), 331–362 (KMPQ…EGGL), 376–412 (EKPQ…RYKP), 506–566 (NLWA…SPPP), 637–678 (VPVF…EQRK), and 840–975 (PHSS…NHPA). The segment covering 98–113 (VEEEGEEEEEGEDEAS) has biased composition (acidic residues). Residues 336-345 (FEPPMPPPCQ) are compositionally biased toward pro residues. Residues 398–412 (LQRESSLEDPSRYKP) are compositionally biased toward basic and acidic residues. Composition is skewed to low complexity over residues 551–562 (NSSASRSPSLAL) and 645–655 (SSPSSNSVSKS). Residues 669 to 678 (PDGEAVEQRK) show a composition bias toward basic and acidic residues. The segment covering 942–951 (AKKREHPRKP) has biased composition (basic residues).

Dispensable for normal development and fertility. The chain is Spermatogenesis-associated protein 31G1 from Homo sapiens (Human).